The sequence spans 358 residues: Trace amine-associated receptor 7c (358 aa).

The Extracellular portion of the chain corresponds to 1–47 (MATDDDSFPWDQDSILSRDLLSASSLQLCYENLNRSCVRSPYSPGSR). N-linked (GlcNAc...) asparagine glycosylation is present at N34. Intrachain disulfides connect C37-C201 and C120-C205. A helical transmembrane segment spans residues 48–68 (LILYAVFGFGAVLAVCGNLLV). Residues 69 to 83 (MTSILHFRQLHSPAN) are Cytoplasmic-facing. The chain crosses the membrane as a helical span at residues 84 to 104 (FLVASLACADLLVGLTVMPFS). At 105–125 (MVRSVEGCWYFGNTYCKFHSC) the chain is on the extracellular side. A helical membrane pass occupies residues 126–148 (FEGSFCYSSLFHLCFISLDRYIA). The Cytoplasmic portion of the chain corresponds to 149–166 (VSDPLIYPTRFTASISGK). Residues 167-187 (CITFSWLLSIIYSFSLLYTGA) form a helical membrane-spanning segment. The Extracellular segment spans residues 188 to 211 (NEAGLEDLVSALTCVGGCQVAVNQ). Residues 212 to 232 (SWVFINFLLFLVPALVMMTVY) form a helical membrane-spanning segment. The Cytoplasmic segment spans residues 233 to 274 (SKIFLIAKQQAQNIEKMSKQTARASESYKDRVAKRERKAAKT). Residues 275 to 295 (LGIAVAAFLLSWLPYFIDSII) traverse the membrane as a helical segment. The Extracellular portion of the chain corresponds to 296 to 309 (DAFLGFITPTYMYE). The helical transmembrane segment at 310 to 332 (ILVWIVYYNSAMNPLIYAFFYPW) threads the bilayer. The Cytoplasmic segment spans residues 333–358 (FRKAIKLIVTGKILRENSSTINLFPE).

This sequence belongs to the G-protein coupled receptor 1 family.

The protein resides in the cell membrane. In terms of biological role, olfactory receptor specific for N,N-dimethylalkylamines trace amines. Trace amine compounds are enriched in animal body fluids and act on trace amine-associated receptors (TAARs) to elicit both intraspecific and interspecific innate behaviors. Ligand-binding causes a conformation change that triggers signaling via G(s)-class of G alpha proteins (GNAL or GNAS). The chain is Trace amine-associated receptor 7c from Rattus norvegicus (Rat).